A 355-amino-acid chain; its full sequence is Peptide chain release factor 1 (355 aa).

Gln231 is subject to N5-methylglutamine.

It belongs to the prokaryotic/mitochondrial release factor family. Post-translationally, methylated by PrmC. Methylation increases the termination efficiency of RF1.

It localises to the cytoplasm. Functionally, peptide chain release factor 1 directs the termination of translation in response to the peptide chain termination codons UAG and UAA. The sequence is that of Peptide chain release factor 1 from Wolinella succinogenes (strain ATCC 29543 / DSM 1740 / CCUG 13145 / JCM 31913 / LMG 7466 / NCTC 11488 / FDC 602W) (Vibrio succinogenes).